The chain runs to 196 residues: ATP-dependent Clp protease proteolytic subunit (196 aa).

Residue S101 is the Nucleophile of the active site. H126 is an active-site residue.

This sequence belongs to the peptidase S14 family. Component of the chloroplastic Clp protease core complex.

The protein localises to the plastid. The protein resides in the chloroplast stroma. The catalysed reaction is Hydrolysis of proteins to small peptides in the presence of ATP and magnesium. alpha-casein is the usual test substrate. In the absence of ATP, only oligopeptides shorter than five residues are hydrolyzed (such as succinyl-Leu-Tyr-|-NHMec, and Leu-Tyr-Leu-|-Tyr-Trp, in which cleavage of the -Tyr-|-Leu- and -Tyr-|-Trp bonds also occurs).. Functionally, cleaves peptides in various proteins in a process that requires ATP hydrolysis. Has a chymotrypsin-like activity. Plays a major role in the degradation of misfolded proteins. The sequence is that of ATP-dependent Clp protease proteolytic subunit from Arabis hirsuta (Hairy rock-cress).